The sequence spans 1038 residues: Activated CDC42 kinase 1 (1038 aa).

Residues 1–110 (MQPEEGTGWL…TSPAPGGPAG (110 aa)) form an SAM-like domain region. Residues 90 to 114 (PPHHSQSTFRKTSPAPGGPAGEGPL) are disordered. In terms of domain architecture, Protein kinase spans 126 to 385 (LRLLEKLGDG…PTFVALRDFL (260 aa)). Residues 132–140 (LGDGSFGVV) and K158 contribute to the ATP site. The active-site Proton acceptor is the D252. At Y284 the chain carries Phosphotyrosine; by SRC and autocatalysis. One can recognise an SH3 domain in the interval 388–448 (AQPTDMRALQ…PRNVVTSVAG (61 aa)). A CRIB domain is found at 454-466 (ISQPLQNSFIHTG). The disordered stretch occupies residues 497–535 (LSVELSTSRPPQHLGGVKKPTYDPVSEDQDPLSSDFKRL). Phosphotyrosine is present on Y518. A required for interaction with SRC region spans residues 623–652 (DWDARPLPPPPAYDDVAQDEDDFEICSINS). The tract at residues 632 to 635 (PPAY) is required for interaction with NEDD4. Disordered stretches follow at residues 659–702 (VPAG…SSAQ) and 718–840 (LQAP…GPRA). S724 is subject to Phosphoserine. Residues 733-876 (GDDKPQVPPR…SYLERYQRFL (144 aa)) are EBD domain. 3 stretches are compositionally biased toward pro residues: residues 738 to 749 (QVPPRVPIPPRP), 772 to 783 (PASPPRVPPREP), and 794 to 805 (PLVPPGSSPLPP). Phosphotyrosine is present on Y827. R839 is subject to Omega-N-methylarginine. A phosphotyrosine mark is found at Y859 and Y872. S881 carries the phosphoserine modification. The tract at residues 917–957 (LDPKANFSTNNSNPGARPPPPRATARLPQRGCPGDGPEAGR) is disordered. A UBA domain is found at 958-996 (PADKIQMAMVHGVTTEECQAALQCHGWSVQRAAQYLKVE).

This sequence belongs to the protein kinase superfamily. Tyr protein kinase family. As to quaternary structure, interacts with NEDD4 (via WW3 domain). NEDD4L and EGF promote association with NEDD4. Homodimer. Interacts with AR, CDC42, WWASL and WWOX. Interacts with CSPG4 (activated). Interacts with MERTK (activated); stimulates autophosphorylation. May interact (phosphorylated) with HSP90AB1; maintains kinase activity. Interacts with NPHP1. Interacts with SNX9 (via SH3 domain). Interacts with SRC (via SH2 and SH3 domain). Interacts with EGFR, and this interaction is dependent on EGF stimulation and kinase activity of EGFR. Interacts (via kinase domain) with AKT1. Part of a collagen stimulated complex involved in cell migration composed of CDC42, CRK, TNK2 and BCAR1/p130cas. Interacts with BCAR1/p130cas via SH3 domains. Forms complexes with GRB2 and numerous receptor tyrosine kinases (RTK) including LTK, AXL or PDGFRL, in which GRB2 promotes RTK recruitment by TNK2. It depends on Mg(2+) as a cofactor. Autophosphorylation regulates kinase activity. Phosphorylation on Tyr-518 is required for interaction with SRC and is observed during association with clathrin-coated pits. In terms of processing, polyubiquitinated by NEDD4 and NEDD4L. Degradation can be induced by EGF and is lysosome-dependent. The Tyr-284 phosphorylated form shows a significant increase in expression in breast cancers during the progressive stages i.e. normal to hyperplasia (ADH), ductal carcinoma in situ (DCIS), invasive ductal carcinoma (IDC) and lymph node metastatic (LNMM) stages. It also shows a significant increase in expression in prostate cancers during the progressive stages.

The protein resides in the cell membrane. It is found in the nucleus. Its subcellular location is the endosome. It localises to the cell junction. The protein localises to the adherens junction. The protein resides in the cytoplasmic vesicle membrane. It is found in the cytoplasmic vesicle. Its subcellular location is the clathrin-coated vesicle. It localises to the membrane. The protein localises to the clathrin-coated pit. The protein resides in the cytoplasm. It is found in the perinuclear region. Its subcellular location is the cytosol. The catalysed reaction is L-tyrosyl-[protein] + ATP = O-phospho-L-tyrosyl-[protein] + ADP + H(+). The enzyme catalyses L-seryl-[protein] + ATP = O-phospho-L-seryl-[protein] + ADP + H(+). It carries out the reaction L-threonyl-[protein] + ATP = O-phospho-L-threonyl-[protein] + ADP + H(+). With respect to regulation, inhibited by AIM-100 (4-amino-5,6-biaryl-furo[2,3-d]pyrimidine), which suppresses activating phosphorylation at Tyr-284. Repressed by dasatinib. Its function is as follows. Non-receptor tyrosine-protein and serine/threonine-protein kinase that is implicated in cell spreading and migration, cell survival, cell growth and proliferation. Transduces extracellular signals to cytosolic and nuclear effectors. Phosphorylates AKT1, AR, MCF2, WASL and WWOX. Implicated in trafficking and clathrin-mediated endocytosis through binding to epidermal growth factor receptor (EGFR) and clathrin. Binds to both poly- and mono-ubiquitin and regulates ligand-induced degradation of EGFR, thereby contributing to the accumulation of EGFR at the limiting membrane of early endosomes. Downstream effector of CDC42 which mediates CDC42-dependent cell migration via phosphorylation of BCAR1. May be involved both in adult synaptic function and plasticity and in brain development. Activates AKT1 by phosphorylating it on 'Tyr-176'. Phosphorylates AR on 'Tyr-267' and 'Tyr-363' thereby promoting its recruitment to androgen-responsive enhancers (AREs). Phosphorylates WWOX on 'Tyr-287'. Phosphorylates MCF2, thereby enhancing its activity as a guanine nucleotide exchange factor (GEF) toward Rho family proteins. Contributes to the control of AXL receptor levels. Confers metastatic properties on cancer cells and promotes tumor growth by negatively regulating tumor suppressor such as WWOX and positively regulating pro-survival factors such as AKT1 and AR. Phosphorylates WASP. The protein is Activated CDC42 kinase 1 (TNK2) of Homo sapiens (Human).